The sequence spans 235 residues: Glucosamine-6-phosphate deaminase (235 aa).

Aspartate 62 serves as the catalytic Proton acceptor; for enolization step. Residue asparagine 128 is the For ring-opening step of the active site. Histidine 130 serves as the catalytic Proton acceptor; for ring-opening step. The active-site For ring-opening step is the glutamate 135.

Belongs to the glucosamine/galactosamine-6-phosphate isomerase family. NagB subfamily.

The catalysed reaction is alpha-D-glucosamine 6-phosphate + H2O = beta-D-fructose 6-phosphate + NH4(+). It functions in the pathway amino-sugar metabolism; N-acetylneuraminate degradation; D-fructose 6-phosphate from N-acetylneuraminate: step 5/5. In terms of biological role, catalyzes the reversible isomerization-deamination of glucosamine 6-phosphate (GlcN6P) to form fructose 6-phosphate (Fru6P) and ammonium ion. The sequence is that of Glucosamine-6-phosphate deaminase from Streptococcus sanguinis (strain SK36).